A 633-amino-acid chain; its full sequence is DNA-directed RNA polymerase subunit gamma (633 aa).

4 residues coordinate Zn(2+): Cys-74, Cys-76, Cys-89, and Cys-92. The Mg(2+) site is built by Asp-471, Asp-473, and Asp-475.

This sequence belongs to the RNA polymerase beta' chain family. RpoC1 subfamily. As to quaternary structure, in cyanobacteria the RNAP catalytic core is composed of 2 alpha, 1 beta, 1 beta', 1 gamma and 1 omega subunit. When a sigma factor is associated with the core the holoenzyme is formed, which can initiate transcription. It depends on Mg(2+) as a cofactor. The cofactor is Zn(2+).

The enzyme catalyses RNA(n) + a ribonucleoside 5'-triphosphate = RNA(n+1) + diphosphate. DNA-dependent RNA polymerase catalyzes the transcription of DNA into RNA using the four ribonucleoside triphosphates as substrates. The protein is DNA-directed RNA polymerase subunit gamma of Prochlorococcus marinus (strain MIT 9211).